The sequence spans 107 residues: Integration host factor subunit beta (107 aa).

The tract at residues 54–107 (NRRPARVGRNPKSGEKVQVPEKHVPHFKPGKELRERVDGRAGEPLKNDEPEDGQ) is disordered. Over residues 65-101 (KSGEKVQVPEKHVPHFKPGKELRERVDGRAGEPLKND) the composition is skewed to basic and acidic residues.

Belongs to the bacterial histone-like protein family. Heterodimer of an alpha and a beta chain.

This protein is one of the two subunits of integration host factor, a specific DNA-binding protein that functions in genetic recombination as well as in transcriptional and translational control. This chain is Integration host factor subunit beta, found in Burkholderia thailandensis (strain ATCC 700388 / DSM 13276 / CCUG 48851 / CIP 106301 / E264).